Here is an 872-residue protein sequence, read N- to C-terminus: Alanine--tRNA ligase (872 aa).

The Zn(2+) site is built by His567, His571, Cys669, and His673.

It belongs to the class-II aminoacyl-tRNA synthetase family. It depends on Zn(2+) as a cofactor.

The protein resides in the cytoplasm. The enzyme catalyses tRNA(Ala) + L-alanine + ATP = L-alanyl-tRNA(Ala) + AMP + diphosphate. Functionally, catalyzes the attachment of alanine to tRNA(Ala) in a two-step reaction: alanine is first activated by ATP to form Ala-AMP and then transferred to the acceptor end of tRNA(Ala). Also edits incorrectly charged Ser-tRNA(Ala) and Gly-tRNA(Ala) via its editing domain. The protein is Alanine--tRNA ligase of Streptococcus agalactiae serotype III (strain NEM316).